Here is a 104-residue protein sequence, read N- to C-terminus: Large ribosomal subunit protein uL24 (104 aa).

The protein belongs to the universal ribosomal protein uL24 family. Part of the 50S ribosomal subunit.

In terms of biological role, one of two assembly initiator proteins, it binds directly to the 5'-end of the 23S rRNA, where it nucleates assembly of the 50S subunit. Functionally, one of the proteins that surrounds the polypeptide exit tunnel on the outside of the subunit. In Pseudomonas savastanoi pv. phaseolicola (strain 1448A / Race 6) (Pseudomonas syringae pv. phaseolicola (strain 1448A / Race 6)), this protein is Large ribosomal subunit protein uL24.